Reading from the N-terminus, the 692-residue chain is Proprotein convertase subtilisin/kexin type 9 (692 aa).

The signal sequence occupies residues 1-30; sequence MGTVSSRRSWWPLPLPLLLLLLLGLAGARA. The propeptide occupies 31 to 152; that stretch reads QEDEDGDYEE…IEEDSSVFAQ (122 aa). Tyrosine 38 bears the Sulfotyrosine mark. A Phosphoserine modification is found at serine 47. In terms of domain architecture, Inhibitor I9 spans 77–149; that stretch reads TYVVVLKEET…VDYIEEDSSV (73 aa). Residues 155–444 enclose the Peptidase S8 domain; sequence PWNLERITPA…VLTPNLVAAL (290 aa). Residues aspartate 186 and histidine 226 each act as charge relay system in the active site. 2 disulfides stabilise this stretch: cysteine 223-cysteine 255 and cysteine 323-cysteine 358. Residue serine 386 is the Charge relay system of the active site. Positions 450–692 are C-terminal domain; it reads RAGWQLFCRT…HLVQASQELQ (243 aa). 3 cysteine pairs are disulfide-bonded: cysteine 457/cysteine 527, cysteine 477/cysteine 526, and cysteine 486/cysteine 509. An N-linked (GlcNAc...) asparagine glycan is attached at asparagine 533. 6 disulfide bridges follow: cysteine 534-cysteine 601, cysteine 552-cysteine 600, cysteine 562-cysteine 588, cysteine 608-cysteine 679, cysteine 626-cysteine 678, and cysteine 635-cysteine 654. Residue serine 688 is modified to Phosphoserine.

It belongs to the peptidase S8 family. As to quaternary structure, monomer. Can self-associate to form dimers and higher multimers which may have increased LDLR degrading activity. The precursor protein but not the mature protein may form multimers. Interacts with APOB, VLDLR, LRP8/APOER2 and BACE1. The full-length immature form (pro-PCSK9) interacts with SCNN1A, SCNN1B and SCNN1G. The pro-PCSK9 form (via C-terminal domain) interacts with LDLR. Interacts (via the C-terminal domain) with ANXA2 (via repeat Annexin 1); the interaction inhibits the degradation of LDLR. Ca(2+) serves as cofactor. Cleavage by furin and PCSK5 generates a truncated inactive protein that is unable to induce LDLR degradation. Post-translationally, undergoes autocatalytic cleavage in the endoplasmic reticulum to release the propeptide from the N-terminus and the cleavage of the propeptide is strictly required for its maturation and activation. The cleaved propeptide however remains associated with the catalytic domain through non-covalent interactions, preventing potential substrates from accessing its active site. As a result, it is secreted from cells as a propeptide-containing, enzymatically inactive protein. In terms of processing, phosphorylation protects the propeptide against proteolysis.

It is found in the cytoplasm. It localises to the secreted. Its subcellular location is the endosome. The protein resides in the lysosome. The protein localises to the cell surface. It is found in the endoplasmic reticulum. It localises to the golgi apparatus. With respect to regulation, its proteolytic activity is autoinhibited by the non-covalent binding of the propeptide to the catalytic domain. Inhibited by EGTA. Its function is as follows. Crucial player in the regulation of plasma cholesterol homeostasis. Binds to low-density lipid receptor family members: low density lipoprotein receptor (LDLR), very low density lipoprotein receptor (VLDLR), apolipoprotein E receptor (LRP1/APOER) and apolipoprotein receptor 2 (LRP8/APOER2), and promotes their degradation in intracellular acidic compartments. Acts via a non-proteolytic mechanism to enhance the degradation of the hepatic LDLR through a clathrin LDLRAP1/ARH-mediated pathway. May prevent the recycling of LDLR from endosomes to the cell surface or direct it to lysosomes for degradation. Can induce ubiquitination of LDLR leading to its subsequent degradation. Inhibits intracellular degradation of APOB via the autophagosome/lysosome pathway in a LDLR-independent manner. Involved in the disposal of non-acetylated intermediates of BACE1 in the early secretory pathway. Inhibits epithelial Na(+) channel (ENaC)-mediated Na(+) absorption by reducing ENaC surface expression primarily by increasing its proteasomal degradation. Regulates neuronal apoptosis via modulation of LRP8/APOER2 levels and related anti-apoptotic signaling pathways. This Colobus guereza (Mantled guereza) protein is Proprotein convertase subtilisin/kexin type 9 (PCSK9).